We begin with the raw amino-acid sequence, 648 residues long: Acetyl-coenzyme A synthetase (648 aa).

CoA is bound by residues 191-194 (RGGR), Thr310, and Asn334. ATP-binding positions include 386–388 (GEP), 410–415 (DTWWQT), Asp499, and Arg514. Ser522 serves as a coordination point for CoA. Arg525 provides a ligand contact to ATP. Mg(2+)-binding residues include Val536, His538, and Ile541. Residue Arg583 coordinates CoA. N6-acetyllysine is present on Lys608.

It belongs to the ATP-dependent AMP-binding enzyme family. The cofactor is Mg(2+). Acetylated. Deacetylation by the SIR2-homolog deacetylase activates the enzyme.

The enzyme catalyses acetate + ATP + CoA = acetyl-CoA + AMP + diphosphate. In terms of biological role, catalyzes the conversion of acetate into acetyl-CoA (AcCoA), an essential intermediate at the junction of anabolic and catabolic pathways. AcsA undergoes a two-step reaction. In the first half reaction, AcsA combines acetate with ATP to form acetyl-adenylate (AcAMP) intermediate. In the second half reaction, it can then transfer the acetyl group from AcAMP to the sulfhydryl group of CoA, forming the product AcCoA. This Aeromonas salmonicida (strain A449) protein is Acetyl-coenzyme A synthetase.